The following is a 941-amino-acid chain: Replicative DNA helicase DnaB (941 aa).

The segment at M1–L25 is disordered. Residues R214–G484 form the SF4 helicase; first part domain. A245 to T252 is an ATP binding site. A DOD-type homing endonuclease domain is found at L534–I683. Residues D646–Q915 form the SF4 helicase; second part domain. Residues Y914–F941 form a disordered region.

It belongs to the helicase family. DnaB subfamily. Homohexamer. Post-translationally, upon expression in E.coli this protein undergoes self splicing that involves a post-translational excision of the intervening region (intein) followed by peptide ligation.

It catalyses the reaction Couples ATP hydrolysis with the unwinding of duplex DNA at the replication fork by translocating in the 5'-3' direction. This creates two antiparallel DNA single strands (ssDNA). The leading ssDNA polymer is the template for DNA polymerase III holoenzyme which synthesizes a continuous strand.. The catalysed reaction is ATP + H2O = ADP + phosphate + H(+). Its function is as follows. The main replicative DNA helicase, it participates in initiation and elongation during chromosome replication. Travels ahead of the DNA replisome, separating dsDNA into templates for DNA synthesis. A processive ATP-dependent 5'-3' DNA helicase it has DNA-dependent ATPase activity. Functionally, the intein is an endonuclease. The chain is Replicative DNA helicase DnaB from Rhodothermus marinus (Rhodothermus obamensis).